The following is a 256-amino-acid chain: Transcription factor BHLH094 (256 aa).

The tract at residues 1 to 125 (MDPAPSLAAE…TPPEPPKQDY (125 aa)) is disordered. Positions 79-97 (PEAKRLKPMKSSDKNDSLR) are enriched in basic and acidic residues. The tract at residues 134 to 147 (QATDSHSLAERARR) is basic motif; degenerate. Residues 134 to 184 (QATDSHSLAERARREKISERMKILQDLVPGCNKVIGKASVLDEIINYIQSL) enclose the bHLH domain. Residues 148 to 184 (EKISERMKILQDLVPGCNKVIGKASVLDEIINYIQSL) are helix-loop-helix motif.

Belongs to the bHLH protein family. As to quaternary structure, interacts with RSS3. Forms a ternary complex with RSS3 and TIFY11A/JAZ9 in the nucleus.

Its subcellular location is the nucleus. In terms of biological role, transcription factor that forms a ternary complex with RSS3 and TIFY11A/JAZ9 to negatively regulate jasmonate-responsive genes. In Oryza sativa subsp. japonica (Rice), this protein is Transcription factor BHLH094.